The chain runs to 669 residues: uncharacterized protein (669 aa).

12 helical membrane passes run 9 to 29 (PLVI…IFIA), 48 to 68 (FSWF…ILSV), 87 to 107 (FLSW…MFFG), 139 to 159 (WGIH…YFGF), 186 to 206 (AIDV…LGFG), 224 to 244 (SFAL…FSAI), 259 to 279 (LTLA…LYLL), 314 to 334 (WTVL…LFIA), 345 to 365 (FIFG…TVFG), 397 to 417 (YLPL…LFFI), 444 to 464 (AIMW…SGGL), and 470 to 490 (MTLI…FSLW).

This sequence belongs to the BCCT transporter (TC 2.A.15) family.

It localises to the cell inner membrane. This is an uncharacterized protein from Haemophilus influenzae (strain ATCC 51907 / DSM 11121 / KW20 / Rd).